The following is a 231-amino-acid chain: Probable transglycosylase SceD (231 aa).

The N-terminal stretch at 1 to 27 (MKKTLLASSLAVGLGIVAGNAGHEAHA) is a signal peptide. The span at 103–116 (APSAVQANQVQSQE) shows a compositional bias: polar residues. The tract at residues 103 to 153 (APSAVQANQVQSQEVEAPQNAQTQQPQASTSNNSQVTATPTESKSSEGSSV) is disordered. A compositionally biased stretch (low complexity) spans 119 to 137 (APQNAQTQQPQASTSNNSQ). Residues 138–153 (VTATPTESKSSEGSSV) are compositionally biased toward polar residues.

It belongs to the transglycosylase family. SceD subfamily.

It localises to the secreted. Its function is as follows. Is able to cleave peptidoglycan and affects clumping and separation of bacterial cells. In Staphylococcus aureus (strain COL), this protein is Probable transglycosylase SceD (sceD).